A 280-amino-acid chain; its full sequence is MTEEKKENQKIVNLIIISDSVGDTAFNMVQAGAVQYPDVKFNYRRYPFITNREKLEKVFNEITEFENVLIAFTLIHEDEQLAAIKFAREHNMKYVDLLSGVIENIHSLTGEEPKHEIGAVHHMGQNYFDRISAMEFAVMYDDGKDPKGFLEADVVLLGVSRTSKTPLSLFLANKNLKVANLPLVPQTHIPDEIYKVDPKKIIGLTNDPSVLNEIRRQRMIAYGLNPDTTYSNMDSINAELDAANKLYKKLGCYVINVAHRSIEETAALIMEHLGIDDYAK.

158-165 contributes to the ADP binding site; it reads GVSRTSKT.

This sequence belongs to the pyruvate, phosphate/water dikinase regulatory protein family. PDRP subfamily.

It carries out the reaction N(tele)-phospho-L-histidyl/L-threonyl-[pyruvate, phosphate dikinase] + ADP = N(tele)-phospho-L-histidyl/O-phospho-L-threonyl-[pyruvate, phosphate dikinase] + AMP + H(+). The catalysed reaction is N(tele)-phospho-L-histidyl/O-phospho-L-threonyl-[pyruvate, phosphate dikinase] + phosphate + H(+) = N(tele)-phospho-L-histidyl/L-threonyl-[pyruvate, phosphate dikinase] + diphosphate. In terms of biological role, bifunctional serine/threonine kinase and phosphorylase involved in the regulation of the pyruvate, phosphate dikinase (PPDK) by catalyzing its phosphorylation/dephosphorylation. The protein is Putative pyruvate, phosphate dikinase regulatory protein of Lactobacillus gasseri (strain ATCC 33323 / DSM 20243 / BCRC 14619 / CIP 102991 / JCM 1131 / KCTC 3163 / NCIMB 11718 / NCTC 13722 / AM63).